The following is a 198-amino-acid chain: tRNA (pseudouridine(54)-N(1))-methyltransferase (198 aa).

Position 128 (Leu-128) interacts with S-adenosyl-L-methionine.

The protein belongs to the methyltransferase superfamily. TrmY family. Homodimer.

It localises to the cytoplasm. It catalyses the reaction pseudouridine(54) in tRNA + S-adenosyl-L-methionine = N(1)-methylpseudouridine(54) in tRNA + S-adenosyl-L-homocysteine + H(+). In terms of biological role, specifically catalyzes the N1-methylation of pseudouridine at position 54 (Psi54) in tRNAs. This Haloferax volcanii (strain ATCC 29605 / DSM 3757 / JCM 8879 / NBRC 14742 / NCIMB 2012 / VKM B-1768 / DS2) (Halobacterium volcanii) protein is tRNA (pseudouridine(54)-N(1))-methyltransferase.